We begin with the raw amino-acid sequence, 1040 residues long: Multidrug resistance protein MdtB (1040 aa).

12 consecutive transmembrane segments (helical) span residues 16-36 (FIMRPVATTLLMVAILLAGII), 347-367 (LMMAIALVVMIIYLFLRNIPA), 369-389 (IIPGVAVPLSLIGTFAVMVFL), 396-416 (LTLMALTIATGFVVDDAIVVI), 440-460 (IGFTIISLIFSLIAVLIPLLF), 472-492 (FAITLAVAILISAVVSLTLTP), 537-557 (WLTLSVALSTLLLSVLLWVFI), 863-883 (LGSTVWLIVAAVVAMYIVLGI), 888-908 (FIHPITILSTLPTAGVGALLA), 911-931 (IAGSELDVIAIIGIILLIGIV), 968-988 (ILMTTLAALLGALPLMLSTGV), and 998-1018 (IGMVGGLIVSQVLTLFTTPVI).

The protein belongs to the resistance-nodulation-cell division (RND) (TC 2.A.6) family. MdtB subfamily. In terms of assembly, part of a tripartite efflux system composed of MdtA, MdtB and MdtC. MdtB forms a heteromultimer with MdtC.

It localises to the cell inner membrane. The protein is Multidrug resistance protein MdtB of Shigella boydii serotype 4 (strain Sb227).